A 455-amino-acid polypeptide reads, in one-letter code: Polyadenylation factor subunit 2 (455 aa).

7 WD repeats span residues 80–119 (KVKH…FETI), 122–162 (AHDT…KELD), 164–203 (IHTE…QERV), 206–245 (GHHW…CVST), 248–288 (KFKH…NELM), 291–331 (RDEV…EKPI), and 337–376 (AHEK…DPNA). 2 disordered regions span residues 406–425 (EYGA…TQYN) and 430–455 (RVPE…GLSI). A compositionally biased stretch (basic and acidic residues) spans 432–446 (PEIKEPTPTTDKEQR).

The protein resides in the nucleus. In terms of biological role, required for 3'-end cleavage and polyadenylation of pre-mRNAs. Also involved in chromosome segregation where it has a role in chromosome attachment to the mitotic spindle. In Candida glabrata (strain ATCC 2001 / BCRC 20586 / JCM 3761 / NBRC 0622 / NRRL Y-65 / CBS 138) (Yeast), this protein is Polyadenylation factor subunit 2 (PFS2).